A 362-amino-acid polypeptide reads, in one-letter code: Chorismate synthase (362 aa).

Arginine 47 is a binding site for NADP(+). Residues 124–126, glycine 286, 301–305, and arginine 327 contribute to the FMN site; these read RSS and KPTAT.

This sequence belongs to the chorismate synthase family. As to quaternary structure, homotetramer. The cofactor is FMNH2.

The catalysed reaction is 5-O-(1-carboxyvinyl)-3-phosphoshikimate = chorismate + phosphate. Its pathway is metabolic intermediate biosynthesis; chorismate biosynthesis; chorismate from D-erythrose 4-phosphate and phosphoenolpyruvate: step 7/7. Functionally, catalyzes the anti-1,4-elimination of the C-3 phosphate and the C-6 proR hydrogen from 5-enolpyruvylshikimate-3-phosphate (EPSP) to yield chorismate, which is the branch point compound that serves as the starting substrate for the three terminal pathways of aromatic amino acid biosynthesis. This reaction introduces a second double bond into the aromatic ring system. This Trichormus variabilis (strain ATCC 29413 / PCC 7937) (Anabaena variabilis) protein is Chorismate synthase.